A 142-amino-acid polypeptide reads, in one-letter code: 3-hydroxyacyl-[acyl-carrier-protein] dehydratase FabZ (142 aa).

The active site involves H47.

The protein belongs to the thioester dehydratase family. FabZ subfamily.

The protein localises to the cytoplasm. It carries out the reaction a (3R)-hydroxyacyl-[ACP] = a (2E)-enoyl-[ACP] + H2O. Involved in unsaturated fatty acids biosynthesis. Catalyzes the dehydration of short chain beta-hydroxyacyl-ACPs and long chain saturated and unsaturated beta-hydroxyacyl-ACPs. This Coxiella burnetii (strain RSA 331 / Henzerling II) protein is 3-hydroxyacyl-[acyl-carrier-protein] dehydratase FabZ.